The sequence spans 357 residues: MIPNPVRAVIIDDSLLVRNIISDQIQKDSKIHVVATGKTGMDCIDLAQKMNPDVIILDVEMPVMDGLTALHELQKKKLGIPVIMLSVLTQNGAEATFKALEYGAIDFVPKPSSVFQFDPEEIGNILKSKILAYFESKIQIPSQNLLKKAPAYSKVPAGSHLKKSPIQAICIGTSTGGPRALQEVFSRIPADISLPILVVQHMPAGFTKAFATRLNDHAKIKVKEAEDGEPIEPNTGYVAPGDAHLSIQSKGGRKWIALNREAPVNGHRPSIEVLLDSAIEEYKSGIIGVIMTGMGKDGSAAIVRVREIGGSTIAQDEQTSVIYGMNRQAVEMGGVEYIEPVTEIINRIQIILKERGI.

Positions 7–125 (RAVIIDDSLL…QFDPEEIGNI (119 aa)) constitute a Response regulatory domain. The residue at position 58 (Asp58) is a 4-aspartylphosphate. The CheB-type methylesterase domain maps to 162-344 (KKSPIQAICI…VEYIEPVTEI (183 aa)). Active-site residues include Ser174, His201, and Asp297.

This sequence belongs to the CheB family. Post-translationally, phosphorylated by CheA. Phosphorylation of the N-terminal regulatory domain activates the methylesterase activity.

The protein resides in the cytoplasm. It carries out the reaction [protein]-L-glutamate 5-O-methyl ester + H2O = L-glutamyl-[protein] + methanol + H(+). The enzyme catalyses L-glutaminyl-[protein] + H2O = L-glutamyl-[protein] + NH4(+). Involved in chemotaxis. Part of a chemotaxis signal transduction system that modulates chemotaxis in response to various stimuli. Catalyzes the demethylation of specific methylglutamate residues introduced into the chemoreceptors (methyl-accepting chemotaxis proteins or MCP) by CheR. Also mediates the irreversible deamidation of specific glutamine residues to glutamic acid. The chain is Protein-glutamate methylesterase/protein-glutamine glutaminase 1 from Leptospira interrogans serogroup Icterohaemorrhagiae serovar Lai (strain 56601).